Here is a 143-residue protein sequence, read N- to C-terminus: Large ribosomal subunit protein uL11 (143 aa).

The protein belongs to the universal ribosomal protein uL11 family. Part of the ribosomal stalk of the 50S ribosomal subunit. Interacts with L10 and the large rRNA to form the base of the stalk. L10 forms an elongated spine to which L12 dimers bind in a sequential fashion forming a multimeric L10(L12)X complex. One or more lysine residues are methylated.

Its function is as follows. Forms part of the ribosomal stalk which helps the ribosome interact with GTP-bound translation factors. This is Large ribosomal subunit protein uL11 from Leptothrix cholodnii (strain ATCC 51168 / LMG 8142 / SP-6) (Leptothrix discophora (strain SP-6)).